A 194-amino-acid polypeptide reads, in one-letter code: MSISKKIVFVTGNAKKLEEALQILGTSFPIESKKVDLPELQGDPIDISIEKCKIAAREVGGPVLVEDTCLCFNALKGLPGPYVKWFLDKLEPEGLYKLLDAWEDKSAYALCNFAFSEGPDSEPIVFAGKTDGIIVQPRGPRNFGWDPVFQPDGYKETYAEMDKSIKNTISHRTRSLQKVKEFLKSKGYENCKFE.

11–16 is an ITP binding site; that stretch reads TGNAKK. Residue Glu39 coordinates Mg(2+). ITP is bound by residues Lys51, 67-68, Lys84, 143-146, Lys166, and 171-172; these read DT, FGWD, and HR.

Belongs to the HAM1 NTPase family. As to quaternary structure, homodimer. The cofactor is Mg(2+). Mn(2+) serves as cofactor.

It localises to the cytoplasm. The catalysed reaction is ITP + H2O = IMP + diphosphate + H(+). The enzyme catalyses dITP + H2O = dIMP + diphosphate + H(+). It catalyses the reaction XTP + H2O = XMP + diphosphate + H(+). Its function is as follows. Pyrophosphatase that hydrolyzes non-canonical purine nucleotides such as inosine triphosphate (ITP), deoxyinosine triphosphate (dITP) or xanthosine 5'-triphosphate (XTP) to their respective monophosphate derivatives. The enzyme does not distinguish between the deoxy- and ribose forms. Probably excludes non-canonical purines from RNA and DNA precursor pools, thus preventing their incorporation into RNA and DNA and avoiding chromosomal lesions. The sequence is that of Inosine triphosphate pyrophosphatase (itpa) from Dictyostelium discoideum (Social amoeba).